The sequence spans 1785 residues: 1,3-beta-glucan synthase component FKS3 (1785 aa).

Helical transmembrane passes span 337 to 357 (FWII…PTLY), 375 to 395 (LSVI…ATVF), 415 to 435 (IGLL…LGFF), 444 to 464 (AYIV…FFAV), 508 to 528 (LWVF…TLSL), 547 to 567 (YLLG…LMLL), 572 to 592 (LFFL…SIVL), and 712 to 732 (LATP…TVLV). 2 stretches are compositionally biased toward basic and acidic residues: residues 791 to 801 (ESSHDEDRLEI) and 815 to 824 (DHTESRKLPT). The interval 791–824 (ESSHDEDRLEIPDALYDPRSSPLSDHTESRKLPT) is disordered. 5 N-linked (GlcNAc...) asparagine glycosylation sites follow: Asn844, Asn874, Asn955, Asn1002, and Asn1170. A run of 3 helical transmembrane segments spans residues 1215–1235 (LFIS…GALN), 1268–1288 (VSIF…PLLI), and 1303–1323 (FLHH…QVYS). Asn1360 carries N-linked (GlcNAc...) asparagine glycosylation. 5 helical membrane passes run 1370–1390 (FFML…WFWI), 1394–1414 (SMCF…DFFI), 1475–1495 (FAEL…FSFI), 1514–1534 (LLVT…LFWV), and 1549–1569 (AGAV…LLDF). The N-linked (GlcNAc...) asparagine glycan is linked to Asn1579. A run of 3 helical transmembrane segments spans residues 1585–1605 (ILLI…TTIF), 1655–1675 (FFLG…PFID), and 1713–1733 (FSLY…PFFA). N-linked (GlcNAc...) asparagine glycosylation occurs at Asn1761.

Belongs to the glycosyltransferase 48 family. N-glycosylated.

The protein resides in the mitochondrion. The protein localises to the membrane. It catalyses the reaction [(1-&gt;3)-beta-D-glucosyl](n) + UDP-alpha-D-glucose = [(1-&gt;3)-beta-D-glucosyl](n+1) + UDP + H(+). In terms of biological role, required for spore wall assembly. The sequence is that of 1,3-beta-glucan synthase component FKS3 (FKS3) from Saccharomyces cerevisiae (strain ATCC 204508 / S288c) (Baker's yeast).